The sequence spans 100 residues: Putative protein adenylyltransferase MJ1379 (100 aa).

Positions 31–45 (GSYARGEQTEESDID) match the GSX(10)DXD motif motif. Residues Asp-43, Asp-45, and Asp-77 each contribute to the Mg(2+) site.

Belongs to the MntA antitoxin family. Probably forms a complex with cognate toxin MJ1380. Mg(2+) serves as cofactor.

It catalyses the reaction L-tyrosyl-[protein] + ATP = O-(5'-adenylyl)-L-tyrosyl-[protein] + diphosphate. It carries out the reaction O-(5'-adenylyl)-L-tyrosyl-[protein] + ATP = O-[5'-(adenylyl-(5'-&gt;3')-adenylyl)]-L-tyrosyl-[protein] + diphosphate. Probable antitoxin component of a putative type VII toxin-antitoxin (TA) system. Neutralizes cognate toxic MJ1380 by di-AMPylation. The chain is Putative protein adenylyltransferase MJ1379 from Methanocaldococcus jannaschii (strain ATCC 43067 / DSM 2661 / JAL-1 / JCM 10045 / NBRC 100440) (Methanococcus jannaschii).